A 326-amino-acid chain; its full sequence is L-lactate dehydrogenase (326 aa).

NAD(+) is bound by residues V26, D47, K52, Y78, and 92 to 93; that span reads GA. 2 residues coordinate substrate: Q95 and R101. NAD(+)-binding positions include T114, 131-133, and S156; that span reads ASN. 133 to 136 serves as a coordination point for substrate; that stretch reads NPVD. 161–164 contributes to the substrate binding site; that stretch reads DTAR. Residues R166 and H181 each coordinate beta-D-fructose 1,6-bisphosphate. Residue H188 is the Proton acceptor of the active site. Y233 carries the phosphotyrosine modification. T242 contacts substrate.

Belongs to the LDH/MDH superfamily. LDH family. As to quaternary structure, homotetramer.

It is found in the cytoplasm. It carries out the reaction (S)-lactate + NAD(+) = pyruvate + NADH + H(+). It functions in the pathway fermentation; pyruvate fermentation to lactate; (S)-lactate from pyruvate: step 1/1. Its activity is regulated as follows. Allosterically activated by fructose 1,6-bisphosphate (FBP). Catalyzes the conversion of lactate to pyruvate. This Corynebacterium jeikeium (strain K411) protein is L-lactate dehydrogenase.